The following is a 441-amino-acid chain: Platelet-activating factor acetylhydrolase (441 aa).

Positions 1 to 21 are cleaved as a signal peptide; it reads MVPPKLHVLFCLCGCLAVVYP. The Nucleophile role is filled by serine 273. Catalysis depends on charge relay system residues aspartate 296 and histidine 351. Asparagine 423 and asparagine 433 each carry an N-linked (GlcNAc...) asparagine glycan.

Belongs to the AB hydrolase superfamily. Lipase family. N-glycosylated. Macrophage-derived PLA2G7 carries sialylated complex-type N-glycans that hinder its binding to HDL particles. As to expression, plasma. Secreted by macrophages (at protein level).

It is found in the secreted. Its subcellular location is the extracellular space. It carries out the reaction a 1-O-alkyl-2-acetyl-sn-glycero-3-phosphocholine + H2O = a 1-O-alkyl-sn-glycero-3-phosphocholine + acetate + H(+). It catalyses the reaction 1-O-decyl-2-acetyl-sn-glycero-3-phosphocholine + H2O = 1-O-decyl-sn-glycero-3-phosphocholine + acetate + H(+). The catalysed reaction is 1-O-dodecyl-2-acetyl-sn-glycero-3-phosphocholine + H2O = 1-O-dodecyl-sn-glycero-3-phosphocholine + acetate + H(+). The enzyme catalyses 1-O-tetradecyl-2-acetyl-sn-glycero-3-phosphocholine + H2O = 1-O-tetradecyl-sn-glycero-3-phosphocholine + acetate + H(+). It carries out the reaction 1-O-hexadecyl-2-acetyl-sn-glycero-3-phosphocholine + H2O = 1-O-hexadecyl-sn-glycero-3-phosphocholine + acetate + H(+). It catalyses the reaction 1-O-octadecyl-2-acetyl-sn-glycero-3-phosphocholine + H2O = 1-O-octadecyl-sn-glycero-3-phosphocholine + acetate + H(+). The catalysed reaction is 1-hexadecanoyl-2-acetyl-sn-glycero-3-phosphocholine + H2O = 1-hexadecanoyl-sn-glycero-3-phosphocholine + acetate + H(+). The enzyme catalyses 1-hexadecanoyl-2-propionyl-sn-glycero-3-phosphocholine + H2O = propanoate + 1-hexadecanoyl-sn-glycero-3-phosphocholine + H(+). It carries out the reaction 1-hexadecanoyl-2-butanoyl-sn-glycero-3-phosphocholine + H2O = butanoate + 1-hexadecanoyl-sn-glycero-3-phosphocholine + H(+). It catalyses the reaction 1-hexadecanoyl-2-pentanoyl-sn-glycero-3-phosphocholine + H2O = pentanoate + 1-hexadecanoyl-sn-glycero-3-phosphocholine + H(+). The catalysed reaction is 1-hexadecanoyl-2-glutaroyl-sn-glycero-3-phosphocholine + H2O = glutarate + 1-hexadecanoyl-sn-glycero-3-phosphocholine + H(+). The enzyme catalyses 1-hexadecanoyl-2-(5-oxopentanoyl)-sn-glycero-3-phosphocholine + H2O = 5-oxopentanoate + 1-hexadecanoyl-sn-glycero-3-phosphocholine + H(+). It carries out the reaction 1-hexadecanoyl-2-(9-oxononanoyl)-sn-glycero-3-phosphocholine + H2O = 9-oxononanoate + 1-hexadecanoyl-sn-glycero-3-phosphocholine + H(+). It catalyses the reaction 1-hexadecanoyl-2-[9-hydroperoxy-(10E-octadecenoyl)]-sn-glycero-3-phosphocholine + H2O = 9-hydroperoxy-10E-octadecenoate + 1-hexadecanoyl-sn-glycero-3-phosphocholine + H(+). The catalysed reaction is 1-hexadecanoyl-2-(10-hydroperoxy-8E-octadecenoyl)-sn-glycero-3-phosphocholine + H2O = 10-hydroperoxy-(8E)-octadecenoate + 1-hexadecanoyl-sn-glycero-3-phosphocholine + H(+). Functionally, lipoprotein-associated calcium-independent phospholipase A2 involved in phospholipid catabolism during inflammatory and oxidative stress response. At the lipid-aqueous interface, hydrolyzes the ester bond of fatty acyl group attached at sn-2 position of phospholipids (phospholipase A2 activity). Specifically targets phospholipids with a short-chain fatty acyl group at sn-2 position. Can hydrolyze phospholipids with long fatty acyl chains, only if they carry oxidized functional groups. Hydrolyzes and inactivates platelet-activating factor (PAF, 1-O-alkyl-2-acetyl-sn-glycero-3-phosphocholine), a potent pro-inflammatory signaling lipid that acts through PTAFR on various innate immune cells. Hydrolyzes oxidatively truncated phospholipids carrying an aldehyde group at omega position, preventing their accumulation in low-density lipoprotein (LDL) particles and uncontrolled pro-inflammatory effects. As part of high-density lipoprotein (HDL) particles, can hydrolyze phospholipids having long-chain fatty acyl hydroperoxides at sn-2 position and protect against potential accumulation of these oxylipins in the vascular wall. Catalyzes the release from membrane phospholipids of F2-isoprostanes, lipid biomarkers of cellular oxidative damage. The sequence is that of Platelet-activating factor acetylhydrolase (PLA2G7) from Homo sapiens (Human).